The primary structure comprises 37 residues: Large ribosomal subunit protein bL36 (37 aa).

It belongs to the bacterial ribosomal protein bL36 family.

This is Large ribosomal subunit protein bL36 from Mycoplasmopsis pulmonis (strain UAB CTIP) (Mycoplasma pulmonis).